Reading from the N-terminus, the 209-residue chain is Small ribosomal subunit protein eS1 (209 aa).

It belongs to the eukaryotic ribosomal protein eS1 family.

This chain is Small ribosomal subunit protein eS1, found in Picrophilus torridus (strain ATCC 700027 / DSM 9790 / JCM 10055 / NBRC 100828 / KAW 2/3).